The chain runs to 606 residues: Aspartate--tRNA(Asp/Asn) ligase (606 aa).

E175 contributes to the L-aspartate binding site. Residues 199–202 are aspartate; sequence QLFK. Residue R221 participates in L-aspartate binding. ATP is bound by residues 221–223 and Q230; that span reads RDE. H453 provides a ligand contact to L-aspartate. Residue E487 coordinates ATP. An L-aspartate-binding site is contributed by R494. 539-542 provides a ligand contact to ATP; it reads GWDR. A disordered region spans residues 564 to 606; it reads GGVDPLTDAPGTIPAEQRKETGVDFKPEKAAKAAQGEKAGKES. Over residues 579 to 594 the composition is skewed to basic and acidic residues; it reads EQRKETGVDFKPEKAA.

The protein belongs to the class-II aminoacyl-tRNA synthetase family. Type 1 subfamily. Homodimer.

It localises to the cytoplasm. It carries out the reaction tRNA(Asx) + L-aspartate + ATP = L-aspartyl-tRNA(Asx) + AMP + diphosphate. Its function is as follows. Aspartyl-tRNA synthetase with relaxed tRNA specificity since it is able to aspartylate not only its cognate tRNA(Asp) but also tRNA(Asn). Reaction proceeds in two steps: L-aspartate is first activated by ATP to form Asp-AMP and then transferred to the acceptor end of tRNA(Asp/Asn). This is Aspartate--tRNA(Asp/Asn) ligase from Corynebacterium aurimucosum (strain ATCC 700975 / DSM 44827 / CIP 107346 / CN-1) (Corynebacterium nigricans).